Consider the following 335-residue polypeptide: Lipoyl synthase (335 aa).

Positions 55, 60, 66, 81, 85, 88, and 292 each coordinate [4Fe-4S] cluster. The 215-residue stretch at 67–281 (WEDREATFLI…SQRAEEIGFQ (215 aa)) folds into the Radical SAM core domain.

The protein belongs to the radical SAM superfamily. Lipoyl synthase family. The cofactor is [4Fe-4S] cluster.

Its subcellular location is the cytoplasm. It carries out the reaction [[Fe-S] cluster scaffold protein carrying a second [4Fe-4S](2+) cluster] + N(6)-octanoyl-L-lysyl-[protein] + 2 oxidized [2Fe-2S]-[ferredoxin] + 2 S-adenosyl-L-methionine + 4 H(+) = [[Fe-S] cluster scaffold protein] + N(6)-[(R)-dihydrolipoyl]-L-lysyl-[protein] + 4 Fe(3+) + 2 hydrogen sulfide + 2 5'-deoxyadenosine + 2 L-methionine + 2 reduced [2Fe-2S]-[ferredoxin]. It participates in protein modification; protein lipoylation via endogenous pathway; protein N(6)-(lipoyl)lysine from octanoyl-[acyl-carrier-protein]: step 2/2. Catalyzes the radical-mediated insertion of two sulfur atoms into the C-6 and C-8 positions of the octanoyl moiety bound to the lipoyl domains of lipoate-dependent enzymes, thereby converting the octanoylated domains into lipoylated derivatives. The chain is Lipoyl synthase from Micrococcus luteus (strain ATCC 4698 / DSM 20030 / JCM 1464 / CCM 169 / CCUG 5858 / IAM 1056 / NBRC 3333 / NCIMB 9278 / NCTC 2665 / VKM Ac-2230) (Micrococcus lysodeikticus).